Reading from the N-terminus, the 452-residue chain is Caspase-2 (452 aa).

Residue Ala2 is modified to N-acetylalanine. The propeptide occupies 2-169 (AASSGRSQSS…TMEHSLDNGD (168 aa)). The CARD domain occupies 32 to 121 (MHPDHQETLK…GHLEDLLLTT (90 aa)). Ser157 carries the post-translational modification Phosphoserine. Catalysis depends on residues His277 and Cys320. Residues 326–333 (DRGVDQQD) constitute a propeptide that is removed on maturation. The segment covering 327-336 (RGVDQQDGKN) has biased composition (basic and acidic residues). The interval 327–349 (RGVDQQDGKNHAQSPGCEESDAG) is disordered. A Phosphoserine modification is found at Ser340.

The protein belongs to the peptidase C14A family. In terms of assembly, heterotetramer that consists of two anti-parallel arranged heterodimers, each one formed by a p18 subunit and a p12 subunit. Forms a complex named the PIDDosome with PIDD1 and CRADD. Interacts with NOL3 (via CARD domain); inhibits CASP2 activity in a phosphorylation-dependent manner. In terms of processing, the mature protease can process its own propeptide, but not that of other caspases.

The enzyme catalyses Strict requirement for an Asp residue at P1, with 316-Asp being essential for proteolytic activity and has a preferred cleavage sequence of Val-Asp-Val-Ala-Asp-|-.. Its function is as follows. Involved in the activation cascade of caspases responsible for apoptosis execution. Might function by either activating some proteins required for cell death or inactivating proteins necessary for cell survival. Associates with PIDD1 and CRADD to form the PIDDosome, a complex that activates CASP2 and triggers apoptosis in response to genotoxic stress. In Rattus norvegicus (Rat), this protein is Caspase-2 (Casp2).